A 290-amino-acid chain; its full sequence is Small ribosomal subunit biogenesis GTPase RsgA (290 aa).

The region spanning 62–213 (KNSLVRPPIV…IADTPGFSSL (152 aa)) is the CP-type G domain. Residues 111–114 (SKLD) and 156–164 (GQTGVGKST) each bind GTP. Positions 237, 242, 244, and 250 each coordinate Zn(2+).

This sequence belongs to the TRAFAC class YlqF/YawG GTPase family. RsgA subfamily. In terms of assembly, monomer. Associates with 30S ribosomal subunit, binds 16S rRNA. Zn(2+) serves as cofactor.

The protein localises to the cytoplasm. One of several proteins that assist in the late maturation steps of the functional core of the 30S ribosomal subunit. Helps release RbfA from mature subunits. May play a role in the assembly of ribosomal proteins into the subunit. Circularly permuted GTPase that catalyzes slow GTP hydrolysis, GTPase activity is stimulated by the 30S ribosomal subunit. The protein is Small ribosomal subunit biogenesis GTPase RsgA of Streptococcus agalactiae serotype III (strain NEM316).